We begin with the raw amino-acid sequence, 292 residues long: E3 ubiquitin-protein ligase trim-21 (292 aa).

The segment at 6–52 (CEICDDDFSSEEDGDHNPRNLKCSHTLCEGCIKKLLKNGRVVCPFCR) adopts an RING-type zinc-finger fold. Residues 90–137 (NFPPKCVEHPYNVAEFACIESNCSSKNKLMCQTCEEFGAHKGHAKELL) form a B box-type zinc finger. Residues C95, H98, C123, and H129 each coordinate Zn(2+). Residues 152–179 (INQLKLNIQNCTVKKNELEEAVVKSEQL) are a coiled coil.

This sequence belongs to the TRIM/RBCC family. Interacts with E2 ubiquitin-conjugating enzyme ubc-21. Interacts with ced-6; this mediates interaction of trim-21 with ced-1 and is required for ced-1 ubiquitination. Interacts with nck-1; the interaction is required for ced-1 ubiquitination. In terms of tissue distribution, in early larva, observed mainly in pharyngeal and body wall muscle cells.

It localises to the cytoplasm. The enzyme catalyses S-ubiquitinyl-[E2 ubiquitin-conjugating enzyme]-L-cysteine + [acceptor protein]-L-lysine = [E2 ubiquitin-conjugating enzyme]-L-cysteine + N(6)-ubiquitinyl-[acceptor protein]-L-lysine.. It participates in protein modification; protein ubiquitination. E3 ubiquitin-protein ligase which catalyzes 'Lys-48'-linked polyubiquitination of ced-1, promoting its proteasomal degradation to maintain appropriate ced-1 levels for apoptotic cell clearance. Acts together with E2 ubiquitin-conjugating enzyme ubc-21. The sequence is that of E3 ubiquitin-protein ligase trim-21 from Caenorhabditis elegans.